The chain runs to 534 residues: Autophagic-related protein 16.2 (534 aa).

WD repeat units follow at residues 243 to 281 (THDGEVHDVEWMSDDTFATAGSDSKVQIWRVSPNKTDAS), 288 to 329 (GCLG…STFS), 330 to 368 (GHTDKVSSARLFQSHNVISGSADRTIKNWDISSIRCLKS), 371 to 411 (VGST…ATYS), 413 to 452 (ELGQKVSSLDISMDGLQVLASSRDDTLSLIDVRNYGIIHL), 459 to 498 (KTSCDSTRAIFSSTGEYVLAGSSNSSVFIWNTKTTKLEKV), and 504 to 534 (SDSAQIMSLAWNPSGRGLLACDRQKTCTLWR).

This sequence belongs to the WD repeat tipD family. Homodimer (via N-terminus). Most likely a component of a complex at least containing atg-5, lgg-3, atg-16.1 and/or atg-16.2. Interacts (via N-terminus) with atg-16.1 (via N-terminus). Interacts (via N-terminus) with atg-5. Interacts (via WD 5-6 repeats) with lgg-2; the interaction is direct. In terms of tissue distribution, expressed in neurons, pharyngeal muscles, body wall muscle cells and intestinal cells.

It localises to the cytoplasm. It is found in the cell membrane. Functionally, most likely a component of the atg-5-atg-12-atg-16.1/atg-16.2 complex, which is recruited to the preautophagosomal membrane and associates with lgg-2 to promote autophagosome formation. Plays a role in the recruitment of lipidated lgg-1 probably to the autophagosome membrane to promote autophagosome formation. Furthermore, association with atg-5 is required for the nucleation of lgg-1 positive autophagosomes. Although its role in autophagosome formation may be distinct to the role of atg-16.2, it functions in a partially redundant manner with atg-16.1 to regulate autophagic processes. In a daf-18/PTEN- and daf-16/FOXO-dependent manner, required for maintaining the numbers of germ stem cell progenitors in the gonad during the late phases of larval development. This chain is Autophagic-related protein 16.2, found in Caenorhabditis elegans.